Here is a 320-residue protein sequence, read N- to C-terminus: Serpentine receptor class gamma-15 (320 aa).

7 helical membrane passes run threonine 29–valine 49, glycine 57–isoleucine 77, phenylalanine 85–isoleucine 105, valine 151–proline 171, leucine 197–threonine 217, isoleucine 240–threonine 260, and leucine 268–phenylalanine 288.

The protein belongs to the nematode receptor-like protein srg family.

The protein localises to the membrane. This Caenorhabditis elegans protein is Serpentine receptor class gamma-15 (srg-15).